Here is a 273-residue protein sequence, read N- to C-terminus: Homeobox protein Nkx-2.2 (273 aa).

Disordered stretches follow at residues 1 to 56 (MSLT…LDAV) and 90 to 131 (LAAG…KRKR). The span at 20–38 (DTNDEEGSVAEGPEEENEG) shows a compositional bias: acidic residues. A DNA-binding region (homeobox) is located at residues 128–187 (KRKRRVLFSKAQTYELERRFRQQRYLSAPEREHLASLIRLTPTQVKIWFQNHRYKMKRAR).

Belongs to the NK-2 homeobox family. Interacts with OLIG2.

It is found in the nucleus. Transcriptional activator involved in the development of insulin-producting beta cells in the endocrine pancreas. May also be involved in specifying diencephalic neuromeric boundaries, and in controlling the expression of genes that play a role in axonal guidance. Binds to elements within the NEUROD1 promoter. The polypeptide is Homeobox protein Nkx-2.2 (NKX2-2) (Homo sapiens (Human)).